Reading from the N-terminus, the 366-residue chain is S-adenosylmethionine:tRNA ribosyltransferase-isomerase (366 aa).

Belongs to the QueA family. As to quaternary structure, monomer.

It is found in the cytoplasm. The enzyme catalyses 7-aminomethyl-7-carbaguanosine(34) in tRNA + S-adenosyl-L-methionine = epoxyqueuosine(34) in tRNA + adenine + L-methionine + 2 H(+). It functions in the pathway tRNA modification; tRNA-queuosine biosynthesis. Its function is as follows. Transfers and isomerizes the ribose moiety from AdoMet to the 7-aminomethyl group of 7-deazaguanine (preQ1-tRNA) to give epoxyqueuosine (oQ-tRNA). This chain is S-adenosylmethionine:tRNA ribosyltransferase-isomerase, found in Bradyrhizobium diazoefficiens (strain JCM 10833 / BCRC 13528 / IAM 13628 / NBRC 14792 / USDA 110).